Here is a 505-residue protein sequence, read N- to C-terminus: Acetylcholine receptor subunit beta (505 aa).

A signal peptide spans M1–G24. The Extracellular portion of the chain corresponds to S25–K245. C152 and C166 form a disulfide bridge. N-linked (GlcNAc...) asparagine glycosylation occurs at N165. 3 helical membrane-spanning segments follow: residues P246–L270, M278–L295, and Y312–L333. The Cytoplasmic segment spans residues H334–R473. Residues K365 to T391 are disordered. The residue at position 394 (Y394) is a Phosphotyrosine; by Tyr-kinases. A helical transmembrane segment spans residues L474 to L492.

The protein belongs to the ligand-gated ion channel (TC 1.A.9) family. Acetylcholine receptor (TC 1.A.9.1) subfamily. Beta-1/CHRNB1 sub-subfamily. In terms of assembly, pentamer of two alpha chains, and one each of the beta, delta, and gamma (in immature muscle) or epsilon (in mature muscle) chains. The muscle heteropentamer composed of alpha-1, beta-1, delta, epsilon subunits interacts with the alpha-conotoxin ImII.

The protein localises to the postsynaptic cell membrane. It localises to the cell membrane. The enzyme catalyses K(+)(in) = K(+)(out). It catalyses the reaction Na(+)(in) = Na(+)(out). Its function is as follows. After binding acetylcholine, the AChR responds by an extensive change in conformation that affects all subunits and leads to opening of an ion-conducting channel across the plasma membrane. The chain is Acetylcholine receptor subunit beta (CHRNB1) from Bos taurus (Bovine).